Reading from the N-terminus, the 150-residue chain is Molybdopterin synthase catalytic subunit (150 aa).

Substrate-binding positions include 37–39 (KVR), 103–104 (HR), lysine 119, and 126–128 (KRE). Lysine 119 is covalently cross-linked (Glycyl lysine isopeptide (Lys-Gly) (interchain with G-Cter in MoaD)).

It belongs to the MoaE family. In terms of assembly, heterotetramer of 2 MoaD subunits and 2 MoaE subunits. Also stable as homodimer. The enzyme changes between these two forms during catalysis.

The catalysed reaction is 2 [molybdopterin-synthase sulfur-carrier protein]-C-terminal-Gly-aminoethanethioate + cyclic pyranopterin phosphate + H2O = molybdopterin + 2 [molybdopterin-synthase sulfur-carrier protein]-C-terminal Gly-Gly + 2 H(+). It functions in the pathway cofactor biosynthesis; molybdopterin biosynthesis. Functionally, converts molybdopterin precursor Z to molybdopterin. This requires the incorporation of two sulfur atoms into precursor Z to generate a dithiolene group. The sulfur is provided by MoaD. This is Molybdopterin synthase catalytic subunit (moaE) from Escherichia coli (strain K12).